The following is a 177-amino-acid chain: Large ribosomal subunit protein uL6 (177 aa).

This sequence belongs to the universal ribosomal protein uL6 family. In terms of assembly, part of the 50S ribosomal subunit.

Its function is as follows. This protein binds to the 23S rRNA, and is important in its secondary structure. It is located near the subunit interface in the base of the L7/L12 stalk, and near the tRNA binding site of the peptidyltransferase center. This is Large ribosomal subunit protein uL6 from Shewanella amazonensis (strain ATCC BAA-1098 / SB2B).